The following is an 885-amino-acid chain: Aconitate hydratase A (885 aa).

[4Fe-4S] cluster is bound by residues Cys425, Cys491, and Cys494.

The protein belongs to the aconitase/IPM isomerase family. Monomer. [4Fe-4S] cluster serves as cofactor.

The catalysed reaction is citrate = D-threo-isocitrate. It catalyses the reaction (2S,3R)-3-hydroxybutane-1,2,3-tricarboxylate = 2-methyl-cis-aconitate + H2O. It functions in the pathway carbohydrate metabolism; tricarboxylic acid cycle; isocitrate from oxaloacetate: step 2/2. It participates in organic acid metabolism; propanoate degradation. Its function is as follows. Involved in the catabolism of short chain fatty acids (SCFA) via the tricarboxylic acid (TCA)(acetyl degradation route) and probably the 2-methylcitrate cycle I (propionate degradation route). Catalyzes the reversible isomerization of citrate to isocitrate via cis-aconitate. Could catalyze the hydration of 2-methyl-cis-aconitate to yield (2R,3S)-2-methylisocitrate. The apo form of AcnA functions as a RNA-binding regulatory protein. The chain is Aconitate hydratase A (acnA) from Rickettsia bellii (strain RML369-C).